Consider the following 952-residue polypeptide: Protein translocase subunit SecA (952 aa).

ATP is bound by residues glutamine 135, 153-157 (GEGKT), and aspartate 575. Residues 614–624 (RHESRRIDNQL) show a composition bias toward basic and acidic residues. Disordered stretches follow at residues 614–636 (RHES…DPGS) and 916–946 (VSAK…GKKY). Cysteine 938, cysteine 940, cysteine 949, and cysteine 950 together coordinate Zn(2+).

Belongs to the SecA family. As to quaternary structure, monomer and homodimer. Part of the essential Sec protein translocation apparatus which comprises SecA, SecYEG and auxiliary proteins SecDF. Other proteins may also be involved. Requires Zn(2+) as cofactor.

Its subcellular location is the cell membrane. It localises to the cytoplasm. The catalysed reaction is ATP + H2O + cellular proteinSide 1 = ADP + phosphate + cellular proteinSide 2.. Its function is as follows. Part of the Sec protein translocase complex. Interacts with the SecYEG preprotein conducting channel. Has a central role in coupling the hydrolysis of ATP to the transfer of proteins into and across the cell membrane, serving as an ATP-driven molecular motor driving the stepwise translocation of polypeptide chains across the membrane. In Dehalococcoides mccartyi (strain ATCC BAA-2100 / JCM 16839 / KCTC 5957 / BAV1), this protein is Protein translocase subunit SecA.